The primary structure comprises 206 residues: Large ribosomal subunit protein uL3 (206 aa).

The disordered stretch occupies residues 122–154; it reads VVKRHGHAGGPGGHGSRFHRHPGSMGANSTPSR.

Belongs to the universal ribosomal protein uL3 family. In terms of assembly, part of the 50S ribosomal subunit. Forms a cluster with proteins L14 and L19.

Functionally, one of the primary rRNA binding proteins, it binds directly near the 3'-end of the 23S rRNA, where it nucleates assembly of the 50S subunit. This is Large ribosomal subunit protein uL3 from Leptospira borgpetersenii serovar Hardjo-bovis (strain JB197).